Reading from the N-terminus, the 428-residue chain is Serine--tRNA ligase (428 aa).

Position 231 to 233 (231 to 233) interacts with L-serine; that stretch reads TAE. 262–264 contacts ATP; that stretch reads RSE. An L-serine-binding site is contributed by glutamate 285. An ATP-binding site is contributed by 349–352; that stretch reads EISS. Serine 385 contacts L-serine.

It belongs to the class-II aminoacyl-tRNA synthetase family. Type-1 seryl-tRNA synthetase subfamily. As to quaternary structure, homodimer. The tRNA molecule binds across the dimer.

It localises to the cytoplasm. It carries out the reaction tRNA(Ser) + L-serine + ATP = L-seryl-tRNA(Ser) + AMP + diphosphate + H(+). It catalyses the reaction tRNA(Sec) + L-serine + ATP = L-seryl-tRNA(Sec) + AMP + diphosphate + H(+). Its pathway is aminoacyl-tRNA biosynthesis; selenocysteinyl-tRNA(Sec) biosynthesis; L-seryl-tRNA(Sec) from L-serine and tRNA(Sec): step 1/1. Catalyzes the attachment of serine to tRNA(Ser). Is also able to aminoacylate tRNA(Sec) with serine, to form the misacylated tRNA L-seryl-tRNA(Sec), which will be further converted into selenocysteinyl-tRNA(Sec). The chain is Serine--tRNA ligase from Staphylococcus aureus (strain MSSA476).